Reading from the N-terminus, the 188-residue chain is Crossover junction endodeoxyribonuclease RuvC (188 aa).

Residues D7, E68, and D141 contribute to the active site. Positions 7, 68, and 141 each coordinate Mg(2+).

It belongs to the RuvC family. Homodimer which binds Holliday junction (HJ) DNA. The HJ becomes 2-fold symmetrical on binding to RuvC with unstacked arms; it has a different conformation from HJ DNA in complex with RuvA. In the full resolvosome a probable DNA-RuvA(4)-RuvB(12)-RuvC(2) complex forms which resolves the HJ. Mg(2+) is required as a cofactor.

Its subcellular location is the cytoplasm. The enzyme catalyses Endonucleolytic cleavage at a junction such as a reciprocal single-stranded crossover between two homologous DNA duplexes (Holliday junction).. Functionally, the RuvA-RuvB-RuvC complex processes Holliday junction (HJ) DNA during genetic recombination and DNA repair. Endonuclease that resolves HJ intermediates. Cleaves cruciform DNA by making single-stranded nicks across the HJ at symmetrical positions within the homologous arms, yielding a 5'-phosphate and a 3'-hydroxyl group; requires a central core of homology in the junction. The consensus cleavage sequence is 5'-(A/T)TT(C/G)-3'. Cleavage occurs on the 3'-side of the TT dinucleotide at the point of strand exchange. HJ branch migration catalyzed by RuvA-RuvB allows RuvC to scan DNA until it finds its consensus sequence, where it cleaves and resolves the cruciform DNA. The sequence is that of Crossover junction endodeoxyribonuclease RuvC from Mycobacterium avium (strain 104).